A 212-amino-acid polypeptide reads, in one-letter code: Peptide methionine sulfoxide reductase MsrA (212 aa).

Residue cysteine 52 is part of the active site.

Belongs to the MsrA Met sulfoxide reductase family.

The enzyme catalyses L-methionyl-[protein] + [thioredoxin]-disulfide + H2O = L-methionyl-(S)-S-oxide-[protein] + [thioredoxin]-dithiol. The catalysed reaction is [thioredoxin]-disulfide + L-methionine + H2O = L-methionine (S)-S-oxide + [thioredoxin]-dithiol. Its function is as follows. Has an important function as a repair enzyme for proteins that have been inactivated by oxidation. Catalyzes the reversible oxidation-reduction of methionine sulfoxide in proteins to methionine. The protein is Peptide methionine sulfoxide reductase MsrA of Salmonella newport (strain SL254).